A 97-amino-acid polypeptide reads, in one-letter code: U6-theraphotoxin-Hhn1a 1 (97 aa).

An N-terminal signal peptide occupies residues M1–A33. Positions S34–R61 are excised as a propeptide. 3 disulfides stabilise this stretch: C63–C77, C70–C82, and C76–C89.

The protein belongs to the neurotoxin 10 (Hwtx-1) family. 12 (Hntx-12) subfamily. Expressed by the venom gland.

It localises to the secreted. Its function is as follows. Ion channel inhibitor. This Cyriopagopus hainanus (Chinese bird spider) protein is U6-theraphotoxin-Hhn1a 1.